Here is a 139-residue protein sequence, read N- to C-terminus: 6,7-dimethyl-8-ribityllumazine synthase (139 aa).

Residues Phe13, 45 to 47 (VFD), and 69 to 71 (AVI) contribute to the 5-amino-6-(D-ribitylamino)uracil site. A (2S)-2-hydroxy-3-oxobutyl phosphate-binding site is contributed by 74-75 (AT). The active-site Proton donor is His77. Leu102 serves as a coordination point for 5-amino-6-(D-ribitylamino)uracil. Arg117 is a binding site for (2S)-2-hydroxy-3-oxobutyl phosphate.

Belongs to the DMRL synthase family.

The enzyme catalyses (2S)-2-hydroxy-3-oxobutyl phosphate + 5-amino-6-(D-ribitylamino)uracil = 6,7-dimethyl-8-(1-D-ribityl)lumazine + phosphate + 2 H2O + H(+). The protein operates within cofactor biosynthesis; riboflavin biosynthesis; riboflavin from 2-hydroxy-3-oxobutyl phosphate and 5-amino-6-(D-ribitylamino)uracil: step 1/2. Functionally, catalyzes the formation of 6,7-dimethyl-8-ribityllumazine by condensation of 5-amino-6-(D-ribitylamino)uracil with 3,4-dihydroxy-2-butanone 4-phosphate. This is the penultimate step in the biosynthesis of riboflavin. The sequence is that of 6,7-dimethyl-8-ribityllumazine synthase from Methanothermobacter thermautotrophicus (strain ATCC 29096 / DSM 1053 / JCM 10044 / NBRC 100330 / Delta H) (Methanobacterium thermoautotrophicum).